The following is a 364-amino-acid chain: Aminomethyltransferase (364 aa).

The protein belongs to the GcvT family. The glycine cleavage system is composed of four proteins: P, T, L and H.

It carries out the reaction N(6)-[(R)-S(8)-aminomethyldihydrolipoyl]-L-lysyl-[protein] + (6S)-5,6,7,8-tetrahydrofolate = N(6)-[(R)-dihydrolipoyl]-L-lysyl-[protein] + (6R)-5,10-methylene-5,6,7,8-tetrahydrofolate + NH4(+). Its function is as follows. The glycine cleavage system catalyzes the degradation of glycine. The chain is Aminomethyltransferase from Thermotoga maritima (strain ATCC 43589 / DSM 3109 / JCM 10099 / NBRC 100826 / MSB8).